The sequence spans 205 residues: Recombination protein RecR (205 aa).

The C4-type zinc finger occupies 59-74; sequence CSVCFHLSAEPVCEVC. A Toprim domain is found at 82–181; it reads GTLCVVADSR…KVTRIAFGLP (100 aa).

Belongs to the RecR family.

Its function is as follows. May play a role in DNA repair. It seems to be involved in an RecBC-independent recombinational process of DNA repair. It may act with RecF and RecO. The protein is Recombination protein RecR of Cyanothece sp. (strain PCC 7425 / ATCC 29141).